Reading from the N-terminus, the 249-residue chain is SRR1-like protein (249 aa).

A disordered region spans residues 1–40 (MAAAALEPWSAVAPRRRKRAAGRRPRPGEGPRAEPEADGE). Residues 14-25 (PRRRKRAAGRRP) show a composition bias toward basic residues. The segment covering 26–40 (RPGEGPRAEPEADGE) has biased composition (basic and acidic residues).

The protein belongs to the SRR1 family.

It localises to the cytoplasm. Its function is as follows. Plays a role in the regulation of heme biosynthesis and in the regulation of the expression of core clock genes. The sequence is that of SRR1-like protein (Srrd) from Mus musculus (Mouse).